A 794-amino-acid polypeptide reads, in one-letter code: Phosphoribosylformylglycinamidine synthase subunit PurL (794 aa).

The active site involves histidine 47. The ATP site is built by tyrosine 50 and lysine 89. Glutamate 91 is a binding site for Mg(2+). Residues 92 to 95 (SHNH) and arginine 114 contribute to the substrate site. Histidine 93 functions as the Proton acceptor in the catalytic mechanism. Aspartate 115 contacts Mg(2+). Glutamine 238 provides a ligand contact to substrate. Aspartate 266 is a Mg(2+) binding site. Substrate is bound at residue 310–312 (ESQ). 2 residues coordinate ATP: aspartate 522 and glycine 559. Residue asparagine 560 coordinates Mg(2+). Serine 562 contacts substrate.

It belongs to the FGAMS family. As to quaternary structure, monomer. Part of the FGAM synthase complex composed of 1 PurL, 1 PurQ and 2 PurS subunits.

The protein localises to the cytoplasm. The catalysed reaction is N(2)-formyl-N(1)-(5-phospho-beta-D-ribosyl)glycinamide + L-glutamine + ATP + H2O = 2-formamido-N(1)-(5-O-phospho-beta-D-ribosyl)acetamidine + L-glutamate + ADP + phosphate + H(+). Its pathway is purine metabolism; IMP biosynthesis via de novo pathway; 5-amino-1-(5-phospho-D-ribosyl)imidazole from N(2)-formyl-N(1)-(5-phospho-D-ribosyl)glycinamide: step 1/2. Its function is as follows. Part of the phosphoribosylformylglycinamidine synthase complex involved in the purines biosynthetic pathway. Catalyzes the ATP-dependent conversion of formylglycinamide ribonucleotide (FGAR) and glutamine to yield formylglycinamidine ribonucleotide (FGAM) and glutamate. The FGAM synthase complex is composed of three subunits. PurQ produces an ammonia molecule by converting glutamine to glutamate. PurL transfers the ammonia molecule to FGAR to form FGAM in an ATP-dependent manner. PurS interacts with PurQ and PurL and is thought to assist in the transfer of the ammonia molecule from PurQ to PurL. The protein is Phosphoribosylformylglycinamidine synthase subunit PurL of Prochlorococcus marinus (strain MIT 9313).